The following is a 348-amino-acid chain: Phospho-N-acetylmuramoyl-pentapeptide-transferase (348 aa).

Helical transmembrane passes span 11 to 31 (SLILFLVTVMGFAFLVGIFLG), 67 to 87 (TAGGVLFFLVLLMSIFFLLPL), 92 to 112 (TWLFVFSIVSWGSLGWYDDIV), 128 to 148 (FIVQLLLSAVTVITVFFIDKE), 163 to 183 (IFLGSSILAKLFCFSLAMLAI), 198 to 218 (GLATGITCMSSFGLLIVAIMS), 222 to 242 (PLAYDVSIVLATLVGISLAFL), 251 to 271 (VFMGDTGSLLIGGILASCAVM), 276 to 296 (LFLIFLGGVFVAEAGSVILQV), and 326 to 346 (VVARFWMAGLLCTVLGIVAAL).

This sequence belongs to the glycosyltransferase 4 family. MraY subfamily. Mg(2+) serves as cofactor.

The protein localises to the cell inner membrane. The catalysed reaction is UDP-N-acetyl-alpha-D-muramoyl-L-alanyl-gamma-D-glutamyl-meso-2,6-diaminopimeloyl-D-alanyl-D-alanine + di-trans,octa-cis-undecaprenyl phosphate = di-trans,octa-cis-undecaprenyl diphospho-N-acetyl-alpha-D-muramoyl-L-alanyl-D-glutamyl-meso-2,6-diaminopimeloyl-D-alanyl-D-alanine + UMP. The protein operates within cell wall biogenesis; peptidoglycan biosynthesis. In terms of biological role, catalyzes the initial step of the lipid cycle reactions in the biosynthesis of the cell wall peptidoglycan: transfers peptidoglycan precursor phospho-MurNAc-pentapeptide from UDP-MurNAc-pentapeptide onto the lipid carrier undecaprenyl phosphate, yielding undecaprenyl-pyrophosphoryl-MurNAc-pentapeptide, known as lipid I. The protein is Phospho-N-acetylmuramoyl-pentapeptide-transferase of Chlamydia felis (strain Fe/C-56) (Chlamydophila felis).